The following is a 137-amino-acid chain: Large ribosomal subunit protein uL16 (137 aa).

It belongs to the universal ribosomal protein uL16 family. Part of the 50S ribosomal subunit.

Its function is as follows. Binds 23S rRNA and is also seen to make contacts with the A and possibly P site tRNAs. This chain is Large ribosomal subunit protein uL16, found in Rhizobium meliloti (strain 1021) (Ensifer meliloti).